The sequence spans 304 residues: Ribosomal protein L11 methyltransferase (304 aa).

Residues T155, G176, D198, and N239 each coordinate S-adenosyl-L-methionine.

This sequence belongs to the methyltransferase superfamily. PrmA family.

It is found in the cytoplasm. It carries out the reaction L-lysyl-[protein] + 3 S-adenosyl-L-methionine = N(6),N(6),N(6)-trimethyl-L-lysyl-[protein] + 3 S-adenosyl-L-homocysteine + 3 H(+). Methylates ribosomal protein L11. This Caldicellulosiruptor bescii (strain ATCC BAA-1888 / DSM 6725 / KCTC 15123 / Z-1320) (Anaerocellum thermophilum) protein is Ribosomal protein L11 methyltransferase.